A 545-amino-acid chain; its full sequence is Chaperonin GroEL (545 aa).

Residues 29–32 (TLGP), Lys50, 86–90 (DGTTT), Gly413, and Asp495 contribute to the ATP site.

Belongs to the chaperonin (HSP60) family. As to quaternary structure, forms a cylinder of 14 subunits composed of two heptameric rings stacked back-to-back. Interacts with the co-chaperonin GroES.

Its subcellular location is the cytoplasm. The catalysed reaction is ATP + H2O + a folded polypeptide = ADP + phosphate + an unfolded polypeptide.. In terms of biological role, together with its co-chaperonin GroES, plays an essential role in assisting protein folding. The GroEL-GroES system forms a nano-cage that allows encapsulation of the non-native substrate proteins and provides a physical environment optimized to promote and accelerate protein folding. The sequence is that of Chaperonin GroEL from Borreliella burgdorferi (strain ATCC 35210 / DSM 4680 / CIP 102532 / B31) (Borrelia burgdorferi).